A 235-amino-acid chain; its full sequence is MASLDRVKVLVLGDSGVGKSSLVHLLCQNQVLGNPSWTVGCSVDVRLHEYREGTPEEKTYYTELWDVGGSVGSASSVKSTRAVFYNAVNGIILVHDLTNKKSSQNLYRWSLEALNRDLQPMGVLVTNGDYDREQFADNQIPLLVIGTKLDQIPEAKRNEVLTRTAFLAEDFNAEEINLDCTNTRCLAAGSSNAVKLSRFFDKVIEKRYPREGNLIPGFSDRKRFGGGNFKSLHYD.

Positions 1–235 (MASLDRVKVL…GGNFKSLHYD (235 aa)) are small GTPase-like. GTP contacts are provided by residues 16–21 (GVGKSS), 148–150 (KLD), and 179–180 (DC).

Belongs to the small GTPase superfamily. Rab family. In terms of assembly, homodimer.

Required for KRAS signaling regulation and modulation of cell proliferation. Regulator of KRAS prenylation, and probably prenylation of other small GTPases. Required for lymphocyte development and function. Not required for myeloid cell development. The chain is Rab-like protein 3 (rabl3) from Xenopus laevis (African clawed frog).